A 528-amino-acid polypeptide reads, in one-letter code: Membrane protein insertase YidC (528 aa).

4 helical membrane-spanning segments follow: residues 5–25 (VVIA…IFPP), 346–366 (YGIA…PLTH), 416–436 (LPMI…MFSI), and 486–506 (MLAL…GLVL).

The protein belongs to the OXA1/ALB3/YidC family. Type 1 subfamily. Interacts with the Sec translocase complex via SecD. Specifically interacts with transmembrane segments of nascent integral membrane proteins during membrane integration.

Its subcellular location is the cell inner membrane. Its function is as follows. Required for the insertion and/or proper folding and/or complex formation of integral membrane proteins into the membrane. Involved in integration of membrane proteins that insert both dependently and independently of the Sec translocase complex, as well as at least some lipoproteins. Aids folding of multispanning membrane proteins. The sequence is that of Membrane protein insertase YidC from Geotalea uraniireducens (strain Rf4) (Geobacter uraniireducens).